The sequence spans 158 residues: SUMO-conjugating enzyme UBC9 (158 aa).

In terms of domain architecture, UBC core spans 4–157 (IALSRLAQER…VRAQAKKFAP (154 aa)). The interval 13–18 (RKAWRK) is interaction with SUMO1. Residue C93 is the Glycyl thioester intermediate of the active site.

It belongs to the ubiquitin-conjugating enzyme family. In terms of assembly, interacts with SOX9.

Its subcellular location is the nucleus. It is found in the cytoplasm. Its pathway is protein modification; protein sumoylation. Accepts the ubiquitin-like proteins SUMO1, SUMO2 and SUMO3 from the UBLE1A-UBLE1B E1 complex and catalyzes their covalent attachment to other proteins with the help of an E3 ligase such as RANBP2 or CBX4. Essential for nuclear architecture and chromosome segregation. This Gallus gallus (Chicken) protein is SUMO-conjugating enzyme UBC9 (UBE2I).